Here is a 202-residue protein sequence, read N- to C-terminus: Glycerol-3-phosphate acyltransferase (202 aa).

Helical transmembrane passes span 2 to 22, 82 to 102, 119 to 139, and 158 to 178; these read ANLLFALAAYLIGSVSFAVVV, DTGLAMVALAVFLGHLFPVFH, AIDPILGLGTLATWLIIAFFF, and VLMNGVDVMAGAIFVISVLLI.

It belongs to the PlsY family. In terms of assembly, probably interacts with PlsX.

It localises to the cell inner membrane. The catalysed reaction is an acyl phosphate + sn-glycerol 3-phosphate = a 1-acyl-sn-glycero-3-phosphate + phosphate. It participates in lipid metabolism; phospholipid metabolism. Functionally, catalyzes the transfer of an acyl group from acyl-phosphate (acyl-PO(4)) to glycerol-3-phosphate (G3P) to form lysophosphatidic acid (LPA). This enzyme utilizes acyl-phosphate as fatty acyl donor, but not acyl-CoA or acyl-ACP. The polypeptide is Glycerol-3-phosphate acyltransferase (Cupriavidus taiwanensis (strain DSM 17343 / BCRC 17206 / CCUG 44338 / CIP 107171 / LMG 19424 / R1) (Ralstonia taiwanensis (strain LMG 19424))).